Reading from the N-terminus, the 229-residue chain is Large ribosomal subunit protein uL1 (229 aa).

Belongs to the universal ribosomal protein uL1 family. As to quaternary structure, part of the 50S ribosomal subunit.

In terms of biological role, binds directly to 23S rRNA. The L1 stalk is quite mobile in the ribosome, and is involved in E site tRNA release. Protein L1 is also a translational repressor protein, it controls the translation of the L11 operon by binding to its mRNA. This chain is Large ribosomal subunit protein uL1, found in Chlorobium phaeobacteroides (strain DSM 266 / SMG 266 / 2430).